Here is a 255-residue protein sequence, read N- to C-terminus: Small ribosomal subunit protein eS1B (255 aa).

A2 is modified (N-acetylalanine; partial). S245 carries the post-translational modification Phosphoserine. A Glycyl lysine isopeptide (Lys-Gly) (interchain with G-Cter in ubiquitin) cross-link involves residue K248. Position 254 is a phosphothreonine (T254).

It belongs to the eukaryotic ribosomal protein eS1 family. As to quaternary structure, component of the small ribosomal subunit. Mature ribosomes consist of a small (40S) and a large (60S) subunit. The 40S subunit contains about 33 different proteins and 1 molecule of RNA (18S). The 60S subunit contains about 49 different proteins and 3 molecules of RNA (25S, 5.8S and 5S).

The protein resides in the cytoplasm. This is Small ribosomal subunit protein eS1B from Saccharomyces cerevisiae (strain JAY291) (Baker's yeast).